The primary structure comprises 308 residues: Quinolinate synthase (308 aa).

H21 and S38 together coordinate iminosuccinate. Residue C83 coordinates [4Fe-4S] cluster. Residues 109–111 and S126 each bind iminosuccinate; that span reads YIN. C170 is a binding site for [4Fe-4S] cluster. Residues 196 to 198 and T213 contribute to the iminosuccinate site; that span reads HPE. C263 is a [4Fe-4S] cluster binding site.

The protein belongs to the quinolinate synthase family. Type 2 subfamily. It depends on [4Fe-4S] cluster as a cofactor.

The protein localises to the cytoplasm. The enzyme catalyses iminosuccinate + dihydroxyacetone phosphate = quinolinate + phosphate + 2 H2O + H(+). Its pathway is cofactor biosynthesis; NAD(+) biosynthesis; quinolinate from iminoaspartate: step 1/1. Its function is as follows. Catalyzes the condensation of iminoaspartate with dihydroxyacetone phosphate to form quinolinate. The protein is Quinolinate synthase of Sulfurisphaera tokodaii (strain DSM 16993 / JCM 10545 / NBRC 100140 / 7) (Sulfolobus tokodaii).